The following is a 362-amino-acid chain: Adenosine deaminase (362 aa).

Zn(2+)-binding residues include His19 and His21. Substrate contacts are provided by His21, Asp23, and Gly181. Residue His208 coordinates Zn(2+). Glu211 acts as the Proton donor in catalysis. Asp300 serves as a coordination point for Zn(2+).

It belongs to the metallo-dependent hydrolases superfamily. Adenosine and AMP deaminases family. Adenosine deaminase subfamily. It depends on Zn(2+) as a cofactor.

It carries out the reaction adenosine + H2O + H(+) = inosine + NH4(+). It catalyses the reaction 2'-deoxyadenosine + H2O + H(+) = 2'-deoxyinosine + NH4(+). Its function is as follows. Catalyzes the hydrolytic deamination of adenosine and 2-deoxyadenosine. This chain is Adenosine deaminase, found in Mycobacterium marinum (strain ATCC BAA-535 / M).